A 263-amino-acid chain; its full sequence is Acetylglutamate kinase (263 aa).

Substrate contacts are provided by residues 48–49 (GG), arginine 70, and asparagine 162.

It belongs to the acetylglutamate kinase family. ArgB subfamily.

It is found in the cytoplasm. It carries out the reaction N-acetyl-L-glutamate + ATP = N-acetyl-L-glutamyl 5-phosphate + ADP. The protein operates within amino-acid biosynthesis; L-arginine biosynthesis; N(2)-acetyl-L-ornithine from L-glutamate: step 2/4. In terms of biological role, catalyzes the ATP-dependent phosphorylation of N-acetyl-L-glutamate. This is Acetylglutamate kinase from Shewanella sediminis (strain HAW-EB3).